Here is a 162-residue protein sequence, read N- to C-terminus: uncharacterized protein (162 aa).

The C2H2-type zinc-finger motif lies at 29–50 (CPFCDYTNADAKVVRKHVKSKH). The disordered stretch occupies residues 60 to 93 (KLESQKSKNNGKKQTGQKKQGKGKKQPKRVRETC). Residues 68 to 87 (NNGKKQTGQKKQGKGKKQPK) are compositionally biased toward basic residues.

To M.jannaschii MJECS06.

This is an uncharacterized protein from Methanocaldococcus jannaschii (strain ATCC 43067 / DSM 2661 / JAL-1 / JCM 10045 / NBRC 100440) (Methanococcus jannaschii).